We begin with the raw amino-acid sequence, 309 residues long: tRNA pseudouridine synthase B (309 aa).

Asp39 serves as the catalytic Nucleophile.

Belongs to the pseudouridine synthase TruB family. Type 1 subfamily.

The enzyme catalyses uridine(55) in tRNA = pseudouridine(55) in tRNA. In terms of biological role, responsible for synthesis of pseudouridine from uracil-55 in the psi GC loop of transfer RNAs. This chain is tRNA pseudouridine synthase B, found in Bacillus velezensis (strain DSM 23117 / BGSC 10A6 / LMG 26770 / FZB42) (Bacillus amyloliquefaciens subsp. plantarum).